The chain runs to 317 residues: Cytochrome c biogenesis protein CcsA (317 aa).

The next 7 membrane-spanning stretches (helical) occupy residues 13–35, 44–64, 71–91, 143–163, 171–191, 225–245, and 286–306; these read ISFS…HEIV, GMIA…IYSG, LYES…VPYF, MLLS…LLVI, MIGF…IKYL, VIGL…VWAN, and AIVA…VNLL.

It belongs to the CcmF/CycK/Ccl1/NrfE/CcsA family. In terms of assembly, may interact with Ccs1.

The protein localises to the plastid. Its subcellular location is the chloroplast thylakoid membrane. Functionally, required during biogenesis of c-type cytochromes (cytochrome c6 and cytochrome f) at the step of heme attachment. The chain is Cytochrome c biogenesis protein CcsA from Illicium oligandrum (Star anise).